Here is a 235-residue protein sequence, read N- to C-terminus: Chalcone--flavanone isomerase 2 (235 aa).

The substrate site is built by Thr50 and Ser192.

It belongs to the chalcone isomerase family.

It carries out the reaction a chalcone = a flavanone.. It participates in secondary metabolite biosynthesis; flavonoid biosynthesis. Functionally, catalyzes the intramolecular cyclization of bicyclic chalcones into tricyclic (S)-flavanones. Responsible for the isomerization of 4,2',4',6'-tetrahydroxychalcone (also termed chalcone) into naringenin. The protein is Chalcone--flavanone isomerase 2 (CHI2) of Chrysanthemum morifolium (Florist's daisy).